Reading from the N-terminus, the 275-residue chain is Ciliary microtubule inner protein 2B (275 aa).

2 disordered regions span residues 62-84 and 125-169; these read PPIR…RGQE and EKQG…SPYS. Basic and acidic residues-rich tracts occupy residues 71–84 and 125–147; these read EVPR…RGQE and EKQG…KDQV.

This sequence belongs to the CIMIP2 family. In terms of assembly, microtubule inner protein component of sperm flagellar doublet microtubules. Expressed in airway epithelial cells.

It localises to the cytoplasm. It is found in the cytoskeleton. Its subcellular location is the cilium axoneme. The protein localises to the flagellum axoneme. In terms of biological role, microtubule inner protein (MIP) part of the dynein-decorated doublet microtubules (DMTs) in cilia axoneme, which is required for motile cilia beating. In Homo sapiens (Human), this protein is Ciliary microtubule inner protein 2B.